A 359-amino-acid chain; its full sequence is Methylthioribose-1-phosphate isomerase (359 aa).

Catalysis depends on D235, which acts as the Proton donor.

Belongs to the eIF-2B alpha/beta/delta subunits family. MtnA subfamily.

Its subcellular location is the cytoplasm. The protein resides in the nucleus. It carries out the reaction 5-(methylsulfanyl)-alpha-D-ribose 1-phosphate = 5-(methylsulfanyl)-D-ribulose 1-phosphate. The protein operates within amino-acid biosynthesis; L-methionine biosynthesis via salvage pathway; L-methionine from S-methyl-5-thio-alpha-D-ribose 1-phosphate: step 1/6. In terms of biological role, catalyzes the interconversion of methylthioribose-1-phosphate (MTR-1-P) into methylthioribulose-1-phosphate (MTRu-1-P). This is Methylthioribose-1-phosphate isomerase (mri1) from Schizosaccharomyces pombe (strain 972 / ATCC 24843) (Fission yeast).